A 234-amino-acid chain; its full sequence is Sugar fermentation stimulation protein A (234 aa).

Residues 201 to 220 constitute a DNA-binding region (H-T-H motif); it reads LLSEAQQRGVEILAYKAEIS.

The protein belongs to the SfsA family.

Functionally, binds to DNA non-specifically. Could be a regulatory factor involved in maltose metabolism. The protein is Sugar fermentation stimulation protein A of Shigella sonnei (strain Ss046).